A 164-amino-acid polypeptide reads, in one-letter code: Thiol peroxidase (164 aa).

Residues 18-163 (VSEGQHAPDF…FDAALEAYRN (146 aa)) enclose the Thioredoxin domain. The active-site Cysteine sulfenic acid (-SOH) intermediate is Cys-60. Cysteines 60 and 93 form a disulfide.

This sequence belongs to the peroxiredoxin family. Tpx subfamily. As to quaternary structure, homodimer.

It catalyses the reaction a hydroperoxide + [thioredoxin]-dithiol = an alcohol + [thioredoxin]-disulfide + H2O. Its function is as follows. Thiol-specific peroxidase that catalyzes the reduction of hydrogen peroxide and organic hydroperoxides to water and alcohols, respectively. Plays a role in cell protection against oxidative stress by detoxifying peroxides. The chain is Thiol peroxidase from Staphylococcus haemolyticus (strain JCSC1435).